A 365-amino-acid polypeptide reads, in one-letter code: Eukaryotic translation initiation factor 3 subunit H (365 aa).

The MPN domain maps to 11–160; the sequence is VKVEALVVMK…LRAFRLSPKF (150 aa).

It belongs to the eIF-3 subunit H family. As to quaternary structure, component of the eukaryotic translation initiation factor 3 (eIF-3) complex.

It localises to the cytoplasm. Its function is as follows. Component of the eukaryotic translation initiation factor 3 (eIF-3) complex, which is involved in protein synthesis of a specialized repertoire of mRNAs and, together with other initiation factors, stimulates binding of mRNA and methionyl-tRNAi to the 40S ribosome. The eIF-3 complex specifically targets and initiates translation of a subset of mRNAs involved in cell proliferation. The chain is Eukaryotic translation initiation factor 3 subunit H from Aspergillus fumigatus (strain CBS 144.89 / FGSC A1163 / CEA10) (Neosartorya fumigata).